The primary structure comprises 171 residues: uncharacterized protein (171 aa).

In terms of domain architecture, PfpI endopeptidase spans 3–171 (KKVAIILANE…FNREIVKQLQ (169 aa)).

The protein belongs to the peptidase C56 family.

This is an uncharacterized protein from Staphylococcus aureus (strain COL).